Reading from the N-terminus, the 949-residue chain is Collagen alpha-2(I) chain (949 aa).

The segment at 1–949 (SGGFDFSFLP…FGYEGDFYRA (949 aa)) is disordered. P10, P13, P34, and P40 each carry 4-hydroxyproline. Positions 27 to 66 (LMGPRGPPGASGAPGPQGFQGPAGEPGEPGQTGPAGARGP) are enriched in low complexity. Position 95 is a 5-hydroxylysine; alternate (K95). O-linked (Gal...) hydroxylysine; alternate glycosylation is present at K95. 2 stretches are compositionally biased toward low complexity: residues 147-162 (SVGPVGPAGPIGSAGP) and 208-229 (PGANGLTGAKGAAGLPGVAGAP). Residues 263 to 272 (GESGGKGEPG) show a composition bias toward gly residues. Residues 273–283 (SAGPQGPPGSS) are compositionally biased toward low complexity. Residues 292 to 313 (NGEGSTGPTGPPGLRGGPGSRG) are compositionally biased toward gly residues. P348 and P351 each carry 4-hydroxyproline. Positions 377 to 396 (LPGIDGRPGPIGPAGARGEA) are enriched in low complexity. Over residues 435 to 444 (GVQGGKGEQG) the composition is skewed to gly residues. 2 stretches are compositionally biased toward low complexity: residues 490-507 (PGESGAVGPSGAIGSRGP) and 519-529 (EPGVVGAPGTA). Over residues 530 to 539 (GPAGSGGLPG) the composition is skewed to gly residues. 2 stretches are compositionally biased toward low complexity: residues 562 to 606 (VGTT…PRGS) and 613 to 633 (VGPAGPNGFAGPAGAAGQPGA). The segment covering 634–643 (KGERGTKGPK) has biased composition (basic and acidic residues). Over residues 651–661 (PTGPVGSAGPA) the composition is skewed to low complexity. A compositionally biased stretch (gly residues) spans 671 to 680 (GSRGDGGPPG). A compositionally biased stretch (low complexity) spans 682–691 (TGFPGAAGRT). A compositionally biased stretch (gly residues) spans 722-736 (GPVGRGETGAGGPPG). 3 stretches are compositionally biased toward low complexity: residues 737–771 (FTGEKGPSGEPGTAGPPGTAGPQGLLGAPGILGLP), 779–792 (LPGVAGAVGEPGPL), and 810–825 (EPGPVGSVGPVGALGP). Over residues 835-846 (RGDKGEPGEKGP) the composition is skewed to basic and acidic residues. A compositionally biased stretch (pro residues) spans 921 to 931 (PAGPPGPPGPP).

This sequence belongs to the fibrillar collagen family. In terms of assembly, trimers of one alpha 2(I) and two alpha 1(I) chains. Interacts (via C-terminus) with TMEM131 (via PapD-L domain); the interaction is direct and is involved in assembly and TRAPPIII ER-to-Golgi transport complex-dependent secretion of collagen. In terms of processing, prolines at the third position of the tripeptide repeating unit (G-X-Y) are hydroxylated in some or all of the chains. In terms of tissue distribution, expressed in bones.

The protein localises to the secreted. Its subcellular location is the extracellular space. The protein resides in the extracellular matrix. Type I collagen is a member of group I collagen (fibrillar forming collagen). The sequence is that of Collagen alpha-2(I) chain from Acratocnus ye (Hispaniolan ground sloth).